We begin with the raw amino-acid sequence, 996 residues long: Phototropin-1 (996 aa).

The segment at 1–184 (MEPTEKPSTK…PGGRSGIPRV (184 aa)) is disordered. Residues S23 and S58 each carry the phosphoserine modification. Positions 49-59 (QNLSDPRGTSP) are enriched in polar residues. Residues 60-70 (QPRPQQEPAPS) are compositionally biased toward pro residues. Residues 141–153 (SGGTENDPNGKKT) are compositionally biased toward polar residues. Positions 155 to 166 (SQRNSQNSCRSS) are enriched in low complexity. Residues 184 to 257 (VSEDLKDALS…AKIRETLAAG (74 aa)) form the PAS 1 domain. At S185 the chain carries Phosphoserine. Residue N233 participates in FMN binding. Position 234 is an S-4a-FMN cysteine (C234). 7 residues coordinate FMN: R235, Q238, R251, N266, N276, Q297, and K302. The region spanning 258 to 312 (NNYCGRILNYKKDGTSFWNLLTIAPIKDESGKVLKFIGMQVEVSKHTEGAKEKAL) is the PAC 1 domain. S350, S376, and S410 each carry phosphoserine. Disordered stretches follow at residues 351–413 (ESTN…SLSF) and 434–453 (YGEE…SVDD). Residues 434-443 (YGEEDDEISD) are compositionally biased toward acidic residues. A compositionally biased stretch (basic and acidic residues) spans 444–453 (RDERPESVDD). Phosphoserine is present on S450. The 74-residue stretch at 462–535 (KGIDLATTLE…KKIRNAIDNQ (74 aa)) folds into the PAS 2 domain. N511 contributes to the FMN binding site. At C512 the chain carries S-4a-FMN cysteine. Residues R513, Q516, R529, N544, N554, F556, and Q575 each contribute to the FMN site. A PAC 2 domain is found at 536 to 590 (TEVTVQLINYTKSGKKFWNIFHLQPMRDQKGEVQYFIGVQLDGSKHVEPVRNVIE). A Protein kinase domain is found at 663–952 (FKPVKPLGSG…ANEVKQHSFF (290 aa)). Residues 669–677 (LGSGDTGSV) and K692 each bind ATP. D788 acts as the Proton acceptor in catalysis. The tract at residues 806–862 (DFDLSCLTSCKPQLLIPSIDEKKKKKQQKSQQTPIFMAEPMRASNSFVGTEEYIAPE) is activation loop.

Belongs to the protein kinase superfamily. AGC Ser/Thr protein kinase family. In terms of assembly, homodimer; disulfide-linked. Interacts with PKS1, PKS2, RPT2, RPT3, PHOT2 and BLUS1. Subunit of a complex made of CAR6, PHOT1 and RPT3/NPH3. Associates with CBC1 and CBC2. Binds to BHP. FMN is required as a cofactor. In terms of processing, autophosphorylated at Ser-185, Ser-350 and Ser-410 in response to blue light irradiation. Post-translationally, 2 molecules of FMN bind covalently to cysteines after exposure to blue light and are reversed in the dark. Present in guard cells (at protein level).

The protein localises to the cell membrane. It localises to the cytoplasm. It catalyses the reaction L-seryl-[protein] + ATP = O-phospho-L-seryl-[protein] + ADP + H(+). The catalysed reaction is L-threonyl-[protein] + ATP = O-phospho-L-threonyl-[protein] + ADP + H(+). Autophosphorylation is inhibited by staurosporine, but not by tyrphostin 9, sphingosine, GW5074 and BML-265. In terms of biological role, protein kinase that acts as a blue light (BL) photoreceptor in a signal-transduction pathway for photo-induced movements. Triggers the phosphorylation of AHA1 and AHA2 C-terminal penultimate Thr in guard cells to activate them and induce stomatal opening in response to blue light (BL). Also phosphorylates BLUS1, a kinase involved in stomatal opening. Mediates the phosphorylation of CBC1 in stomata, but not of CBC2, in response to blue light. Required for blue light mediated mRNA destabilization. Mediates calcium spiking of extracellular origin in response to a low rate of blue light. Also mediates rapid membrane depolarization and growth inhibition in response to blue light. Necessary for root phototropism. Involved in hypocotyl phototropism under a low rate but not under a high rate of blue light. Contributes to the chloroplast accumulation but seems not to be required for chloroplast translocation. Regulates stomata opening and photomorphogenesis response of leaf tissue. Confers sensitivity to drought. Not involved in hypocotyl elongation inhibition, anthocyanin accumulation or cotyledon opening. Involved in the regulation of leaf position and morphology via the phosphorylation of ABCB19 during blue light responses to modulate auxin distribution. This chain is Phototropin-1, found in Arabidopsis thaliana (Mouse-ear cress).